A 286-amino-acid chain; its full sequence is Shikimate dehydrogenase (NADP(+)) (286 aa).

Shikimate contacts are provided by residues 21-23 and Thr-68; that span reads TLS. The active-site Proton acceptor is Lys-72. NADP(+) is bound at residue Asp-84. 2 residues coordinate shikimate: Asn-93 and Asp-108. Residues 132-136 and Leu-226 each bind NADP(+); that span reads GYGGA. Tyr-228 provides a ligand contact to shikimate. Gly-249 serves as a coordination point for NADP(+).

It belongs to the shikimate dehydrogenase family. In terms of assembly, homodimer.

The enzyme catalyses shikimate + NADP(+) = 3-dehydroshikimate + NADPH + H(+). It participates in metabolic intermediate biosynthesis; chorismate biosynthesis; chorismate from D-erythrose 4-phosphate and phosphoenolpyruvate: step 4/7. Functionally, involved in the biosynthesis of the chorismate, which leads to the biosynthesis of aromatic amino acids. Catalyzes the reversible NADPH linked reduction of 3-dehydroshikimate (DHSA) to yield shikimate (SA). The protein is Shikimate dehydrogenase (NADP(+)) of Thermosynechococcus vestitus (strain NIES-2133 / IAM M-273 / BP-1).